The following is a 106-amino-acid chain: COX assembly mitochondrial protein homolog (106 aa).

The residue at position 2 (Ala-2) is an N-acetylalanine. The CHCH domain maps to 28-71 (RERCSEQVEDFTRCCKDSGILMVLKCRKENSALKDCLTAYYNDP). 2 consecutive short sequence motifs (cx9C motif) follow at residues 31–41 (CSEQVEDFTRC) and 53–63 (CRKENSALKDC). 2 cysteine pairs are disulfide-bonded: Cys-31-Cys-63 and Cys-41-Cys-53.

Belongs to the CMC family. In terms of assembly, component of the MITRAC (mitochondrial translation regulation assembly intermediate of cytochrome c oxidase complex) complex, the core components of this complex being COA3/MITRAC12 and COX14.

The protein localises to the mitochondrion. In terms of biological role, component of the MITRAC (mitochondrial translation regulation assembly intermediate of cytochrome c oxidase complex) complex, that regulates cytochrome c oxidase assembly. This is COX assembly mitochondrial protein homolog (Cmc1) from Mus musculus (Mouse).